Consider the following 408-residue polypeptide: GDSL esterase/lipase At1g54790 (408 aa).

A signal peptide spans 1-24 (MNITKMKLFYVILFFISSLQISNS). Catalysis depends on Ser38, which acts as the Nucleophile. Residues Asn273, Asn289, and Asn361 are each glycosylated (N-linked (GlcNAc...) asparagine). Catalysis depends on residues Asp370 and His373.

It belongs to the 'GDSL' lipolytic enzyme family.

It localises to the secreted. The chain is GDSL esterase/lipase At1g54790 from Arabidopsis thaliana (Mouse-ear cress).